The sequence spans 37 residues: Large ribosomal subunit protein bL36 (37 aa).

Belongs to the bacterial ribosomal protein bL36 family.

The sequence is that of Large ribosomal subunit protein bL36 from Shewanella woodyi (strain ATCC 51908 / MS32).